Consider the following 211-residue polypeptide: Pyridoxine/pyridoxamine 5'-phosphate oxidase (211 aa).

Substrate-binding positions include 7–10 (RREY) and K65. Residues 60-65 (RIVLLK), 75-76 (YT), R81, K82, and Q104 contribute to the FMN site. 3 residues coordinate substrate: Y122, R126, and S130. FMN contacts are provided by residues 139–140 (QS) and W184. 190 to 192 (RLH) is a binding site for substrate. R194 contributes to the FMN binding site.

It belongs to the pyridoxamine 5'-phosphate oxidase family. In terms of assembly, homodimer. It depends on FMN as a cofactor.

It carries out the reaction pyridoxamine 5'-phosphate + O2 + H2O = pyridoxal 5'-phosphate + H2O2 + NH4(+). The enzyme catalyses pyridoxine 5'-phosphate + O2 = pyridoxal 5'-phosphate + H2O2. Its pathway is cofactor metabolism; pyridoxal 5'-phosphate salvage; pyridoxal 5'-phosphate from pyridoxamine 5'-phosphate: step 1/1. The protein operates within cofactor metabolism; pyridoxal 5'-phosphate salvage; pyridoxal 5'-phosphate from pyridoxine 5'-phosphate: step 1/1. Catalyzes the oxidation of either pyridoxine 5'-phosphate (PNP) or pyridoxamine 5'-phosphate (PMP) into pyridoxal 5'-phosphate (PLP). The polypeptide is Pyridoxine/pyridoxamine 5'-phosphate oxidase (Vibrio parahaemolyticus serotype O3:K6 (strain RIMD 2210633)).